The primary structure comprises 141 residues: Large ribosomal subunit protein uL11 (141 aa).

It belongs to the universal ribosomal protein uL11 family. Part of the ribosomal stalk of the 50S ribosomal subunit. Interacts with L10 and the large rRNA to form the base of the stalk. L10 forms an elongated spine to which L12 dimers bind in a sequential fashion forming a multimeric L10(L12)X complex. In terms of processing, one or more lysine residues are methylated.

Its function is as follows. Forms part of the ribosomal stalk which helps the ribosome interact with GTP-bound translation factors. This is Large ribosomal subunit protein uL11 from Acetivibrio thermocellus (strain ATCC 27405 / DSM 1237 / JCM 9322 / NBRC 103400 / NCIMB 10682 / NRRL B-4536 / VPI 7372) (Clostridium thermocellum).